The chain runs to 391 residues: Cell cycle checkpoint control protein RAD9A (391 aa).

Phosphotyrosine is present on Tyr28. Positions 51–91 (FLFAPLFFQQYQAATPGQDLLRCKILMKSFLSVFRSLAMLE) are possesses 3'-5' exonuclease activity. Residues 266–391 (SDTDSHSQDL…VLAEDSEGEG (126 aa)) are sufficient for interaction with ABL1. Positions 268–282 (TDSHSQDLGSPERHQ) are enriched in basic and acidic residues. Disordered regions lie at residues 268–301 (TDSHSQDLGSPERHQPVPQLQAHSTPHPDDFAND) and 319–391 (SRVL…EGEG). Phosphoserine is present on residues Ser272, Ser277, and Ser328. Position 341 is a phosphoserine; by CK2 (Ser341). 2 positions are modified to phosphoserine: Ser375 and Ser380. At Ser387 the chain carries Phosphoserine; by CK2.

This sequence belongs to the rad9 family. Component of the toroidal 9-1-1 (RAD9-RAD1-HUS1) complex, composed of RAD9A, RAD1 and HUS1. The 9-1-1 complex associates with LIG1, POLB, FEN1, RAD17, HDAC1, RPA1 and RPA2. The 9-1-1 complex associates with the RAD17-RFC complex. RAD9A interacts with BCL2L1, FEN1, RAD9B, ABL1, RPA1, ATAD5 and RPA2. Interacts with DNAJC7. Interacts (when phosphorylated) with TOPBP1. In terms of processing, constitutively phosphorylated on serine and threonine amino acids in absence of DNA damage. Hyperphosphorylated by PRKCD and ABL1 upon DNA damage. Its phosphorylation by PRKCD may be required for the formation of the 9-1-1 complex. Phosphorylated at Ser-341 and Ser-387 by CK2, promoting interaction with TOPBP1.

Its subcellular location is the nucleus. The enzyme catalyses Exonucleolytic cleavage in the 3'- to 5'-direction to yield nucleoside 5'-phosphates.. Component of the 9-1-1 cell-cycle checkpoint response complex that plays a major role in DNA repair. The 9-1-1 complex is recruited to DNA lesion upon damage by the RAD17-replication factor C (RFC) clamp loader complex. Acts then as a sliding clamp platform on DNA for several proteins involved in long-patch base excision repair (LP-BER). The 9-1-1 complex stimulates DNA polymerase beta (POLB) activity by increasing its affinity for the 3'-OH end of the primer-template and stabilizes POLB to those sites where LP-BER proceeds; endonuclease FEN1 cleavage activity on substrates with double, nick, or gap flaps of distinct sequences and lengths; and DNA ligase I (LIG1) on long-patch base excision repair substrates. The 9-1-1 complex is necessary for the recruitment of RHNO1 to sites of double-stranded breaks (DSB) occurring during the S phase. RAD9A possesses 3'-&gt;5' double stranded DNA exonuclease activity. The chain is Cell cycle checkpoint control protein RAD9A (RAD9A) from Homo sapiens (Human).